Consider the following 274-residue polypeptide: Kit ligand (274 aa).

A signal peptide spans 1 to 25 (MKKTQTWIITCIYLQLLLFNPLVKT). At 26 to 215 (KGICGKRVTD…SNSIGDSNLQ (190 aa)) the chain is on the extracellular side. Intrachain disulfides connect Cys29/Cys114 and Cys68/Cys164. Asn90, Asn97, Asn145, and Asn196 each carry an N-linked (GlcNAc...) asparagine glycan. The chain crosses the membrane as a helical span at residues 216-238 (WAAMALPAFFSLVIGFAFGALYW). Topologically, residues 239–274 (KKKQPNLTRTVENIQINEEDNEISMLQEKEREFQEV) are cytoplasmic.

It belongs to the SCF family. Homodimer, non-covalently linked. In terms of processing, a soluble form is produced by proteolytic processing of the extracellular domain.

It is found in the cytoplasm. The protein resides in the cytoskeleton. It localises to the cell membrane. Its subcellular location is the cell projection. The protein localises to the lamellipodium. It is found in the filopodium. The protein resides in the secreted. In terms of biological role, stimulates the proliferation of mast cells. Able to augment the proliferation of both myeloid and lymphoid hematopoietic progenitors in bone marrow culture. Also mediates cell-cell adhesion. Acts synergistically with other cytokines, probably interleukins. The polypeptide is Kit ligand (KITLG) (Canis lupus familiaris (Dog)).